We begin with the raw amino-acid sequence, 210 residues long: Orotate phosphoribosyltransferase (210 aa).

Residues R94, K98, H100, and 120–128 (EDLISTGGS) each bind 5-phospho-alpha-D-ribose 1-diphosphate. S124 contributes to the orotate binding site.

It belongs to the purine/pyrimidine phosphoribosyltransferase family. PyrE subfamily. In terms of assembly, homodimer. The cofactor is Mg(2+).

The enzyme catalyses orotidine 5'-phosphate + diphosphate = orotate + 5-phospho-alpha-D-ribose 1-diphosphate. The protein operates within pyrimidine metabolism; UMP biosynthesis via de novo pathway; UMP from orotate: step 1/2. Catalyzes the transfer of a ribosyl phosphate group from 5-phosphoribose 1-diphosphate to orotate, leading to the formation of orotidine monophosphate (OMP). The polypeptide is Orotate phosphoribosyltransferase (Bacillus mycoides (strain KBAB4) (Bacillus weihenstephanensis)).